A 234-amino-acid polypeptide reads, in one-letter code: Leucyl/phenylalanyl-tRNA--protein transferase (234 aa).

It belongs to the L/F-transferase family.

It is found in the cytoplasm. The catalysed reaction is N-terminal L-lysyl-[protein] + L-leucyl-tRNA(Leu) = N-terminal L-leucyl-L-lysyl-[protein] + tRNA(Leu) + H(+). It catalyses the reaction N-terminal L-arginyl-[protein] + L-leucyl-tRNA(Leu) = N-terminal L-leucyl-L-arginyl-[protein] + tRNA(Leu) + H(+). It carries out the reaction L-phenylalanyl-tRNA(Phe) + an N-terminal L-alpha-aminoacyl-[protein] = an N-terminal L-phenylalanyl-L-alpha-aminoacyl-[protein] + tRNA(Phe). Its function is as follows. Functions in the N-end rule pathway of protein degradation where it conjugates Leu, Phe and, less efficiently, Met from aminoacyl-tRNAs to the N-termini of proteins containing an N-terminal arginine or lysine. This is Leucyl/phenylalanyl-tRNA--protein transferase from Citrobacter koseri (strain ATCC BAA-895 / CDC 4225-83 / SGSC4696).